The sequence spans 374 residues: C-C chemokine receptor type 2 (374 aa).

Residues 1–42 (MLSTSRSRFIRNTNESGEEVTTFFDYDYGAPCHKFDVKQIGA) are Extracellular-facing. N14 carries an N-linked (GlcNAc...) asparagine glycan. At Y26 the chain carries Sulfotyrosine. The helical transmembrane segment at 43 to 70 (QLLPPLYSLVFIFGFVGNMLVVLILINC) threads the bilayer. The Cytoplasmic segment spans residues 71–80 (KKLKCLTDIY). Residues 81–100 (LLNLAISDLLFLITLPLWAH) form a helical membrane-spanning segment. The Extracellular segment spans residues 101–114 (SAANEWVFGNAMCK). An intrachain disulfide couples C113 to C190. The helical transmembrane segment at 115 to 136 (LFTGLYHIGYFGGIFFIILLTI) threads the bilayer. Over 137-153 (DRYLAIVHAVFALKART) the chain is Cytoplasmic. Y139 carries the post-translational modification Phosphotyrosine; by JAK2. A helical membrane pass occupies residues 154 to 178 (VTFGVVTSVITWLVAVFASVPGIIF). Residues 179–206 (TKCQKEDSVYVCGPYFPRGWNNFHTIMR) lie on the Extracellular side of the membrane. The helical transmembrane segment at 207-226 (NILGLVLPLLIMVICYSGIL) threads the bilayer. Over 227 to 243 (KTLLRCRNEKKRHRAVR) the chain is Cytoplasmic. A helical transmembrane segment spans residues 244–268 (VIFTIMIVYFLFWTPYNIVILLNTF). Residues 269–285 (QEFFGLSNCESTSQLDQ) are Extracellular-facing. A helical membrane pass occupies residues 286 to 309 (ATQVTETLGMTHCCINPIIYAFVG). The Cytoplasmic portion of the chain corresponds to 310–374 (EKFRSLFHIA…EASLQDKEGA (65 aa)). The interval 348–374 (QGLLDGRGKGKSIGRAPEASLQDKEGA) is disordered.

The protein belongs to the G-protein coupled receptor 1 family. In terms of assembly, interacts with ARRB1. Interacts (via extracellular N-terminal region) with beta-defensin DEFB106A/DEFB106B; this interaction may preferentially require specific tyrosine sulfation on CCR2. Interacts with NUP85; the interaction is required for CCR2 clusters formation on the cell membrane and CCR2 signaling. (Microbial infection) Binds to HIV-1 Tat. In terms of processing, N-glycosylated. Post-translationally, sulfation increases the affinity for both monomeric and dimeric CCL2 with stronger binding to the monomeric form. Binding of sulfated CCR2 to CCL2 promotes conversion of CCL2 from dimer to monomer. Expressed by monocytes and IL2-activated NK cells. Abundantly expressed on CD14+/CD16- monocytes and weakly on CD14+/CD16+ monocytes, type 2 dendritic cells (DCs) and plasmacytoid DCs (at protein level).

It is found in the cell membrane. Functionally, key functional receptor for CCL2 but can also bind CCL7, and CCL12. Also transduces signaling mediated by CCL13. Its binding with CCL2 on monocytes and macrophages mediates chemotaxis and migration induction through the activation of the PI3K cascade, the small G protein Rac and lamellipodium protrusion. Also acts as a receptor for the beta-defensin DEFB106A/DEFB106B. Regulates the expression of T-cell inflammatory cytokines and T-cell differentiation, promoting the differentiation of T-cells into T-helper 17 cells (Th17) during inflammation. Facilitates the export of mature thymocytes by enhancing directional movement of thymocytes to sphingosine-1-phosphate stimulation and up-regulation of S1P1R expression; signals through the JAK-STAT pathway to regulate FOXO1 activity leading to an increased expression of S1P1R. Plays an important role in mediating peripheral nerve injury-induced neuropathic pain. Increases NMDA-mediated synaptic transmission in both dopamine D1 and D2 receptor-containing neurons, which may be caused by MAPK/ERK-dependent phosphorylation of GRIN2B/NMDAR2B. Mediates the recruitment of macrophages and monocytes to the injury site following brain injury. Its function is as follows. (Microbial infection) Alternative coreceptor with CD4 for HIV-1 infection. The chain is C-C chemokine receptor type 2 (CCR2) from Homo sapiens (Human).